Reading from the N-terminus, the 139-residue chain is MDIKNVHIKNHEQTAHAPSTLEKIRKVKQGGKLSEQTKTFGSTYRRLDPNQPSPTVTRSGYRDFIHPFEDRMLTVRELACLQTFPLDWEFTGTRLDSYSSKRKVTMTQFGQVGNAVPPLLAEAVAKAVSEQLLDVIDEK.

The 135-residue stretch at Met-1–Val-135 folds into the SAM-dependent MTase C5-type domain. Residues Lys-38–Arg-58 form a disordered region.

The protein belongs to the class I-like SAM-binding methyltransferase superfamily. C5-methyltransferase family. Heterodimer of an alpha and a beta subunit.

The catalysed reaction is a 2'-deoxycytidine in DNA + S-adenosyl-L-methionine = a 5-methyl-2'-deoxycytidine in DNA + S-adenosyl-L-homocysteine + H(+). Its function is as follows. A methylase, recognizes the double-stranded sequence 5'-CYCGRG-3', methylates C-1 on both strands, and protects the DNA from cleavage by the AquI endonuclease. This is Type II methyltransferase M.AquIB (aquIMB) from Picosynechococcus sp. (strain ATCC 27264 / PCC 7002 / PR-6) (Agmenellum quadruplicatum).